The sequence spans 389 residues: Probable zinc transporter zip2 (389 aa).

7 helical membrane passes run 6 to 26 (GWIL…GIYL), 48 to 68 (LVTG…ASVM), 88 to 108 (VFQF…NHFL), 267 to 289 (VLVA…LYLA), 305 to 325 (SCSL…GGIG), 329 to 349 (FLNF…LILS), and 368 to 388 (HSFI…IFDS).

Belongs to the ZIP transporter (TC 2.A.5) family.

The protein localises to the endoplasmic reticulum membrane. Probable zinc transporter that may mediate zinc remobilization from the endoplasmic reticulum under zinc limitation. This is Probable zinc transporter zip2 (zip2) from Schizosaccharomyces pombe (strain 972 / ATCC 24843) (Fission yeast).